A 139-amino-acid polypeptide reads, in one-letter code: Transcription antitermination protein NusB (139 aa).

This sequence belongs to the NusB family.

In terms of biological role, involved in transcription antitermination. Required for transcription of ribosomal RNA (rRNA) genes. Binds specifically to the boxA antiterminator sequence of the ribosomal RNA (rrn) operons. This chain is Transcription antitermination protein NusB, found in Cronobacter sakazakii (strain ATCC BAA-894) (Enterobacter sakazakii).